Here is a 741-residue protein sequence, read N- to C-terminus: Protein O-mannosyl-transferase TMTC4 (741 aa).

The Cytoplasmic segment spans residues methionine 1–histidine 10. Residues isoleucine 11–leucine 31 form a helical membrane-spanning segment. The Extracellular portion of the chain corresponds to cysteine 32–asparagine 110. A glycan (N-linked (GlcNAc...) asparagine) is linked at asparagine 77. A helical transmembrane segment spans residues isoleucine 111 to glycine 131. The Cytoplasmic segment spans residues leucine 132–arginine 146. The next 2 membrane-spanning stretches (helical) occupy residues alanine 147–alanine 166 and glycine 167–leucine 185. Over glycine 186 to glutamate 198 the chain is Cytoplasmic. A helical membrane pass occupies residues glycine 199–leucine 219. Over cysteine 220–glycine 224 the chain is Extracellular. Residues isoleucine 225–leucine 245 form a helical membrane-spanning segment. Over alanine 246–lysine 265 the chain is Cytoplasmic. A helical membrane pass occupies residues asparagine 266–isoleucine 286. Residues arginine 287–arginine 354 are Extracellular-facing. The helical transmembrane segment at valine 355 to serine 375 threads the bilayer. Residues glutamate 376 to arginine 382 lie on the Cytoplasmic side of the membrane. Residues isoleucine 383 to phenylalanine 403 traverse the membrane as a helical segment. At arginine 404–arginine 412 the chain is on the extracellular side. Residues valine 413–serine 433 traverse the membrane as a helical segment. Over arginine 434 to proline 441 the chain is Cytoplasmic. Residues valine 442–glycine 462 form a helical membrane-spanning segment. The Extracellular portion of the chain corresponds to glutamate 463–valine 741. 7 TPR repeats span residues alanine 482–tyrosine 515, valine 516–phenylalanine 549, alanine 550–tyrosine 583, proline 584–histidine 617, serine 618–aspartate 651, histidine 652–valine 685, and alanine 686–alanine 719. A glycan (N-linked (GlcNAc...) asparagine) is linked at asparagine 497. Residue asparagine 609 is glycosylated (N-linked (GlcNAc...) asparagine). Asparagine 725 carries an N-linked (GlcNAc...) asparagine glycan.

The protein belongs to the TMTC family.

The protein resides in the membrane. Its subcellular location is the endoplasmic reticulum. The catalysed reaction is a di-trans,poly-cis-dolichyl beta-D-mannosyl phosphate + L-seryl-[protein] = 3-O-(alpha-D-mannosyl)-L-seryl-[protein] + a di-trans,poly-cis-dolichyl phosphate + H(+). It catalyses the reaction a di-trans,poly-cis-dolichyl beta-D-mannosyl phosphate + L-threonyl-[protein] = 3-O-(alpha-D-mannosyl)-L-threonyl-[protein] + a di-trans,poly-cis-dolichyl phosphate + H(+). The protein operates within protein modification; protein glycosylation. Transfers mannosyl residues to the hydroxyl group of serine or threonine residues. The 4 members of the TMTC family are O-mannosyl-transferases dedicated primarily to the cadherin superfamily, each member seems to have a distinct role in decorating the cadherin domains with O-linked mannose glycans at specific regions. Also acts as O-mannosyl-transferase on other proteins such as PDIA3. The chain is Protein O-mannosyl-transferase TMTC4 from Mus musculus (Mouse).